Consider the following 490-residue polypeptide: Probable cytosol aminopeptidase (490 aa).

Lys-256 and Asp-261 together coordinate Mn(2+). Residue Lys-268 is part of the active site. Mn(2+) is bound by residues Asp-280, Asp-340, and Glu-342. Arg-344 is an active-site residue.

The protein belongs to the peptidase M17 family. The cofactor is Mn(2+).

The protein resides in the cytoplasm. The enzyme catalyses Release of an N-terminal amino acid, Xaa-|-Yaa-, in which Xaa is preferably Leu, but may be other amino acids including Pro although not Arg or Lys, and Yaa may be Pro. Amino acid amides and methyl esters are also readily hydrolyzed, but rates on arylamides are exceedingly low.. It carries out the reaction Release of an N-terminal amino acid, preferentially leucine, but not glutamic or aspartic acids.. In terms of biological role, presumably involved in the processing and regular turnover of intracellular proteins. Catalyzes the removal of unsubstituted N-terminal amino acids from various peptides. The chain is Probable cytosol aminopeptidase from Prochlorococcus marinus (strain MIT 9313).